The primary structure comprises 474 residues: Solute carrier family 49 member A3 (474 aa).

The disordered stretch occupies residues 1–20 (MEGESAETEPLIQSSSAADR). Transmembrane regions (helical) follow at residues 38–58 (WFILSVLCLLNCSNAMAWLTF), 69–89 (LCVSLPLVNWLSLVFVLAAVV), 105–126 (CSLIGSSWLNACGCVLRVCGVL), 134–154 (VFAVVMCGQTLCALAQPLVIF), 175–195 (LASMANTVGLLLANLLSPLIV), 201–221 (LFLLLLIYSIPAAVACLLATL), 258–278 (WILLLCFGSGIGIFTCFSTLL), 290–310 (GFAGVCGAVSIVCGVAGAFLL), 326–346 (ICMCLTSVSCSAFAVVSQLPA), 349–369 (VLLVLVCCCFGLFGYSVYPVG), 388–408 (LIFTSGQIQAALYLLLLQALA), and 428–448 (VPVLVMAGVCAISSCVFVVFF).

The protein belongs to the major facilitator superfamily.

It is found in the membrane. This Danio rerio (Zebrafish) protein is Solute carrier family 49 member A3 (slc49a3).